Consider the following 282-residue polypeptide: MQEIFLCSISNVRSGDCKEDCAYCTQSSHHQGAIKRYKFKDEKVVLQEARALKQLGALGFCLVTSGRELDDEKCEYIAKLAKAINKEELGLHLIACCGRADLEQLEFLRDAGIHSYNHNLETSQNFFPKICSTHTWEERFITCENALRAGLGLCSGGIFGLNESWEDRIEMLRALASLSPHTTPINFFIKNPVLPIDAETLSADEALECVLLAKEFLPNARLMVAGGREVVFKDNDKQEAKLFEYGINAVVLGDYLTTKGKAPKKDIEKLLSYGLTMATSCH.

Residues 1 to 228 (MQEIFLCSIS…NARLMVAGGR (228 aa)) form the Radical SAM core domain. Positions 17, 21, and 24 each coordinate [4Fe-4S] cluster. [2Fe-2S] cluster is bound by residues Cys-61, Cys-96, Cys-154, and Arg-221.

Belongs to the radical SAM superfamily. Biotin synthase family. Homodimer. Requires [4Fe-4S] cluster as cofactor. The cofactor is [2Fe-2S] cluster.

The enzyme catalyses (4R,5S)-dethiobiotin + (sulfur carrier)-SH + 2 reduced [2Fe-2S]-[ferredoxin] + 2 S-adenosyl-L-methionine = (sulfur carrier)-H + biotin + 2 5'-deoxyadenosine + 2 L-methionine + 2 oxidized [2Fe-2S]-[ferredoxin]. Its pathway is cofactor biosynthesis; biotin biosynthesis; biotin from 7,8-diaminononanoate: step 2/2. Catalyzes the conversion of dethiobiotin (DTB) to biotin by the insertion of a sulfur atom into dethiobiotin via a radical-based mechanism. The polypeptide is Biotin synthase (Helicobacter pylori (strain P12)).